An 88-amino-acid polypeptide reads, in one-letter code: Small ribosomal subunit protein bS20 (88 aa).

The protein belongs to the bacterial ribosomal protein bS20 family.

In terms of biological role, binds directly to 16S ribosomal RNA. The polypeptide is Small ribosomal subunit protein bS20 (Heliobacterium modesticaldum (strain ATCC 51547 / Ice1)).